Reading from the N-terminus, the 510-residue chain is ATP synthase subunit alpha (510 aa).

An ATP-binding site is contributed by 170–177; that stretch reads GDRQTGKT.

The protein belongs to the ATPase alpha/beta chains family. As to quaternary structure, F-type ATPases have 2 components, CF(1) - the catalytic core - and CF(0) - the membrane proton channel. CF(1) has five subunits: alpha(3), beta(3), gamma(1), delta(1), epsilon(1). CF(0) has three main subunits: a(1), b(2) and c(9-12). The alpha and beta chains form an alternating ring which encloses part of the gamma chain. CF(1) is attached to CF(0) by a central stalk formed by the gamma and epsilon chains, while a peripheral stalk is formed by the delta and b chains.

Its subcellular location is the cell inner membrane. The enzyme catalyses ATP + H2O + 4 H(+)(in) = ADP + phosphate + 5 H(+)(out). Functionally, produces ATP from ADP in the presence of a proton gradient across the membrane. The alpha chain is a regulatory subunit. This chain is ATP synthase subunit alpha, found in Acidiphilium cryptum (strain JF-5).